The chain runs to 293 residues: Cell division protein FtsQ (293 aa).

The Cytoplasmic segment spans residues 1–29; the sequence is MSQVRSKSQQGKRQAKPQEVVPATILTEQ. The helical transmembrane segment at 30 to 52 threads the bilayer; it reads LSTYAFGTVTAGAVMVAVAAWMG. The Periplasmic portion of the chain corresponds to 53-293; the sequence is GSLASIDERI…SQIDDKSGGA (241 aa). Positions 75–144 constitute a POTRA domain; sequence FTVTKISIEG…NDIWILAENR (70 aa).

This sequence belongs to the FtsQ/DivIB family. FtsQ subfamily.

It is found in the cell inner membrane. Functionally, essential cell division protein. This Hirschia baltica (strain ATCC 49814 / DSM 5838 / IFAM 1418) protein is Cell division protein FtsQ.